We begin with the raw amino-acid sequence, 291 residues long: Bifunctional protein FolD (291 aa).

NADP(+)-binding positions include 168-170 (GRG), Thr-195, and Val-236.

It belongs to the tetrahydrofolate dehydrogenase/cyclohydrolase family. Homodimer.

It carries out the reaction (6R)-5,10-methylene-5,6,7,8-tetrahydrofolate + NADP(+) = (6R)-5,10-methenyltetrahydrofolate + NADPH. It catalyses the reaction (6R)-5,10-methenyltetrahydrofolate + H2O = (6R)-10-formyltetrahydrofolate + H(+). The protein operates within one-carbon metabolism; tetrahydrofolate interconversion. Catalyzes the oxidation of 5,10-methylenetetrahydrofolate to 5,10-methenyltetrahydrofolate and then the hydrolysis of 5,10-methenyltetrahydrofolate to 10-formyltetrahydrofolate. This chain is Bifunctional protein FolD, found in Bifidobacterium longum (strain DJO10A).